We begin with the raw amino-acid sequence, 327 residues long: MSNNLSIIGAGAWGSALSIALYDNFDTIYLHTHTQADIKKLKSKHSALSIPYPYNVKIAYDLYKLQDSKNIIITTPSYAFSEILEKIKPFINHTHKIAWGTKGFDTTKRCFLYESFKRLFPNRNGCVISGPSFAFEVALNKPTALVVASIDENTRNHFAKLIQTNTLRTYTNADIIGVEVGGSVKNILAIAAGIASGLKYGFNTQAALIARGLSEMSRLGKSLGAKNSTFIGLSGLGDLVLTCSDNLSRNRRFGQELVNNHNIKNALINVGGTVEGLNTLDLILSIANKKQVEMPICEQVYQITQGKITPAEAVNYLMSREQQQNNE.

The NADPH site is built by W13, H33, and K102. K102, G130, and S132 together coordinate sn-glycerol 3-phosphate. Residue A134 participates in NADPH binding. K185, D238, S248, R249, and N250 together coordinate sn-glycerol 3-phosphate. Catalysis depends on K185, which acts as the Proton acceptor. R249 is an NADPH binding site. Position 275 (E275) interacts with NADPH.

The protein belongs to the NAD-dependent glycerol-3-phosphate dehydrogenase family.

It localises to the cytoplasm. The catalysed reaction is sn-glycerol 3-phosphate + NAD(+) = dihydroxyacetone phosphate + NADH + H(+). It catalyses the reaction sn-glycerol 3-phosphate + NADP(+) = dihydroxyacetone phosphate + NADPH + H(+). The protein operates within membrane lipid metabolism; glycerophospholipid metabolism. In terms of biological role, catalyzes the reduction of the glycolytic intermediate dihydroxyacetone phosphate (DHAP) to sn-glycerol 3-phosphate (G3P), the key precursor for phospholipid synthesis. The sequence is that of Glycerol-3-phosphate dehydrogenase [NAD(P)+] from Vesicomyosocius okutanii subsp. Calyptogena okutanii (strain HA).